Consider the following 385-residue polypeptide: Arginine biosynthesis bifunctional protein ArgJ (385 aa).

Residues Thr-142, Lys-168, Thr-179, Glu-259, Asn-380, and Thr-385 each coordinate substrate. Catalysis depends on Thr-179, which acts as the Nucleophile.

It belongs to the ArgJ family. In terms of assembly, heterotetramer of two alpha and two beta chains.

It localises to the cytoplasm. It carries out the reaction N(2)-acetyl-L-ornithine + L-glutamate = N-acetyl-L-glutamate + L-ornithine. It catalyses the reaction L-glutamate + acetyl-CoA = N-acetyl-L-glutamate + CoA + H(+). It functions in the pathway amino-acid biosynthesis; L-arginine biosynthesis; L-ornithine and N-acetyl-L-glutamate from L-glutamate and N(2)-acetyl-L-ornithine (cyclic): step 1/1. Its pathway is amino-acid biosynthesis; L-arginine biosynthesis; N(2)-acetyl-L-ornithine from L-glutamate: step 1/4. Functionally, catalyzes two activities which are involved in the cyclic version of arginine biosynthesis: the synthesis of N-acetylglutamate from glutamate and acetyl-CoA as the acetyl donor, and of ornithine by transacetylation between N(2)-acetylornithine and glutamate. The chain is Arginine biosynthesis bifunctional protein ArgJ from Leptospira interrogans serogroup Icterohaemorrhagiae serovar Lai (strain 56601).